The primary structure comprises 329 residues: UDP-3-O-acylglucosamine N-acyltransferase (329 aa).

H224 serves as the catalytic Proton acceptor.

Belongs to the transferase hexapeptide repeat family. LpxD subfamily. Homotrimer.

The catalysed reaction is a UDP-3-O-[(3R)-3-hydroxyacyl]-alpha-D-glucosamine + a (3R)-hydroxyacyl-[ACP] = a UDP-2-N,3-O-bis[(3R)-3-hydroxyacyl]-alpha-D-glucosamine + holo-[ACP] + H(+). Its pathway is bacterial outer membrane biogenesis; LPS lipid A biosynthesis. Its function is as follows. Catalyzes the N-acylation of UDP-3-O-acylglucosamine using 3-hydroxyacyl-ACP as the acyl donor. Is involved in the biosynthesis of lipid A, a phosphorylated glycolipid that anchors the lipopolysaccharide to the outer membrane of the cell. The chain is UDP-3-O-acylglucosamine N-acyltransferase from Albidiferax ferrireducens (strain ATCC BAA-621 / DSM 15236 / T118) (Rhodoferax ferrireducens).